The primary structure comprises 285 residues: NAC domain-containing protein 92 (285 aa).

The 151-residue stretch at 20-170 (LPPGFRFHPT…EWVICRVFQK (151 aa)) folds into the NAC domain. Residues 117–176 (VGMKKTLVFYKGRAPKGVKTNWVMHEYRLEGKYCIENLPQTAKNEWVICRVFQKRADGTK) mediate DNA binding.

Forms homodimers. Interacts with GLK1 and GLK2. Interacts with NLA. Ubiquitinated by NLA. Ubiquitination of NAC92 leads to its degradation by the proteasome during leaf senescence under nitrogen deficiency. Mostly expressed in roots and flowers, and, to a lower extent, in shoots and leaves. Particularly expressed in old and senescing tissues.

The protein localises to the nucleus. Functionally, transcription activator that binds to DNA in promoters of target genes on a specific bipartite motif 5'-[ACG][CA]GT[AG](5-6n)[CT]AC[AG]-3'. Promotes lateral root development. Triggers the expression of senescence-associated genes during age-, salt- and dark-induced senescence through a regulatory network that may involve cross-talk with salt- and H(2)O(2)-dependent signaling pathways. Also regulates genes during seed germination. Positively regulates aging-induced cell death. Involved in age-related resistance (ARR) against Pseudomonas syringae pv. tomato and Hyaloperonospora arabidopsidis. Antagonizes GLK1 and GLK2 transcriptional activity, shifting the balance from chloroplast maintenance towards deterioration during leaf senescence. Promotes the expression of senescence-associated genes, including ENDO1/BFN1, SWEET15/SAG29 and SINA1/At3g13672, during senescence onset. In Arabidopsis thaliana (Mouse-ear cress), this protein is NAC domain-containing protein 92.